A 275-amino-acid polypeptide reads, in one-letter code: Anamorsin homolog (275 aa).

Residues 1 to 147 (MTSASIHIGS…QSASSAAATG (147 aa)) form an N-terminal SAM-like domain region. Residues 148 to 183 (RINLGGAKTKVKLSLDDDDDDQLIDEDDLLNGGGGM) form a linker region. [2Fe-2S] cluster contacts are provided by cysteine 203, cysteine 209, cysteine 212, and cysteine 214. The tract at residues 203-214 (CGGRKACDNCTC) is fe-S binding site A. [4Fe-4S] cluster-binding residues include cysteine 238, cysteine 241, cysteine 249, and cysteine 252. Short sequence motifs (cx2C motif) lie at residues 238-241 (CGNC) and 249-252 (CAGC). Residues 238–252 (CGNCAKGDAFRCAGC) are fe-S binding site B.

This sequence belongs to the anamorsin family. Monomer. [2Fe-2S] cluster is required as a cofactor. The cofactor is [4Fe-4S] cluster.

It is found in the cytoplasm. The protein localises to the mitochondrion intermembrane space. In terms of biological role, component of the cytosolic iron-sulfur (Fe-S) protein assembly (CIA) machinery. Required for the maturation of extramitochondrial Fe-S proteins. Part of an electron transfer chain functioning in an early step of cytosolic Fe-S biogenesis, facilitating the de novo assembly of a [4Fe-4S] cluster on the cytosolic Fe-S scaffold complex. Electrons are transferred from NADPH via a FAD- and FMN-containing diflavin oxidoreductase. Together with the diflavin oxidoreductase, also required for the assembly of the diferric tyrosyl radical cofactor of ribonucleotide reductase (RNR), probably by providing electrons for reduction during radical cofactor maturation in the catalytic small subunit. The sequence is that of Anamorsin homolog from Thalassiosira pseudonana (Marine diatom).